A 461-amino-acid chain; its full sequence is Putative cytochrome P450 132 (461 aa).

C409 serves as a coordination point for heme.

The protein belongs to the cytochrome P450 family. Heme is required as a cofactor.

The polypeptide is Putative cytochrome P450 132 (cyp132) (Mycobacterium tuberculosis (strain ATCC 25618 / H37Rv)).